The following is a 461-amino-acid chain: Probable tubulin polyglutamylase TTLL9 (461 aa).

Positions 1 to 10 (MSRQKNQNSK) are enriched in polar residues. Residues 1–20 (MSRQKNQNSKGHGVSKGKER) are disordered. A TTL domain is found at 22 to 402 (QRTLIRFKTT…EARLTGKEKR (381 aa)). ATP is bound by residues lysine 149 and 155–156 (QG). Glutamine 155 lines the a protein pocket. The disordered stretch occupies residues 172 to 208 (RKGTSGKKPTGVETQPARANMNPSGSHDTRSSDDQKD). The segment covering 198 to 208 (HDTRSSDDQKD) has biased composition (basic and acidic residues). ATP contacts are provided by residues 218–221 (QRYV) and 231–233 (KFD). Position 257 (arginine 257) interacts with L-glutamate. 276-277 (TN) serves as a coordination point for ATP. Residue lysine 294 coordinates L-glutamate. Residues aspartate 348, glutamate 361, and asparagine 363 each contribute to the Mg(2+) site. Lysine 379 is an L-glutamate binding site.

It belongs to the tubulin--tyrosine ligase family. It depends on Mg(2+) as a cofactor. In terms of tissue distribution, highly expressed in brain and testis. Expressed in heart, kidney and lung. In the brain, expressed in ependymal cilia, cortex, corpus callosum and striatum. In the testis, specifically expressed in the seminiferous tubules.

It localises to the cytoplasm. Its subcellular location is the cytoskeleton. The protein localises to the cilium basal body. The protein resides in the flagellum axoneme. The enzyme catalyses (L-glutamyl)(n)-gamma-L-glutamyl-L-glutamyl-[protein] + L-glutamate + ATP = (L-glutamyl)(n+1)-gamma-L-glutamyl-L-glutamyl-[protein] + ADP + phosphate + H(+). Its function is as follows. Probable tubulin polyglutamylase that generates side chains of glutamate on the gamma-carboxyl group of specific glutamate residues within the C-terminal tail of target proteins. Similar to TTLL1, may acquire enzymatic activity only in complex with other proteins as it is most likely lacking domains important for autonomous activity. Mediates tubulin polyglutamylation which induces establishment of microtubule heterogeneity in sperm flagella, thereby playing a role in normal motile flagella axoneme structure and sperm flagella beating pattern. The polypeptide is Probable tubulin polyglutamylase TTLL9 (Mus musculus (Mouse)).